We begin with the raw amino-acid sequence, 182 residues long: Cbp/p300-interacting transactivator 4 (182 aa).

The disordered stretch occupies residues 22-129 (GPHAPRTLQP…PPPPPPALGC (108 aa)). Positions 64 to 89 (SPVSFQPFPVSQSPGAGSTHLQSAAT) are enriched in polar residues. Low complexity predominate over residues 100–117 (AAAGGPSPLQPAPGAAAS).

Belongs to the CITED family. As to quaternary structure, interacts via its C-terminal region with the CH1 domain of CREBBP and EP300. Interacts with all TFAP2/AP-2 isoforms. As to expression, strongly expressed in heart, spleen and testis, and weakly in liver and kidney.

The protein localises to the nucleus. The protein resides in the cytoplasm. Functionally, acts as a transcriptional coactivator for TFAP2/AP-2. Enhances estrogen-dependent transactivation mediated by estrogen receptors. May function as an inhibitor of transactivation by HIF1A by disrupting HIF1A interaction with CREBBP. May be involved in regulation of gene expression during development and differentiation of blood cells, endothelial cells and mammary epithelial cells. This Mus musculus (Mouse) protein is Cbp/p300-interacting transactivator 4.